The sequence spans 367 residues: 2-aminoethylphosphonate--pyruvate transaminase (367 aa).

Lysine 194 is modified (N6-(pyridoxal phosphate)lysine).

Belongs to the class-V pyridoxal-phosphate-dependent aminotransferase family. PhnW subfamily. Homodimer. Pyridoxal 5'-phosphate serves as cofactor.

It catalyses the reaction (2-aminoethyl)phosphonate + pyruvate = phosphonoacetaldehyde + L-alanine. Functionally, involved in phosphonate degradation. This chain is 2-aminoethylphosphonate--pyruvate transaminase, found in Salmonella paratyphi B (strain ATCC BAA-1250 / SPB7).